We begin with the raw amino-acid sequence, 486 residues long: Cardiolipin synthase A (486 aa).

Helical transmembrane passes span 3–23 (TFYTVVSWLVILGYWVLIAGV) and 38–58 (MAWLLIIYILPLVGIIAYLSV). 2 consecutive PLD phosphodiesterase domains span residues 219–246 (MDLRQHRKMVMIDNYIAYTGSMNMVDPR) and 399–426 (EGGLLHTKSVLVDGELSLVGTVNLDMRS). Residues histidine 224, lysine 226, aspartate 231, histidine 404, lysine 406, and aspartate 411 contribute to the active site.

Belongs to the phospholipase D family. Cardiolipin synthase subfamily. ClsA sub-subfamily.

The protein localises to the cell inner membrane. It carries out the reaction 2 a 1,2-diacyl-sn-glycero-3-phospho-(1'-sn-glycerol) = a cardiolipin + glycerol. In terms of biological role, catalyzes the reversible phosphatidyl group transfer from one phosphatidylglycerol molecule to another to form cardiolipin (CL) (diphosphatidylglycerol) and glycerol. This is Cardiolipin synthase A from Salmonella paratyphi A (strain ATCC 9150 / SARB42).